Here is a 234-residue protein sequence, read N- to C-terminus: Leucyl/phenylalanyl-tRNA--protein transferase (234 aa).

The protein belongs to the L/F-transferase family.

It localises to the cytoplasm. It catalyses the reaction N-terminal L-lysyl-[protein] + L-leucyl-tRNA(Leu) = N-terminal L-leucyl-L-lysyl-[protein] + tRNA(Leu) + H(+). The enzyme catalyses N-terminal L-arginyl-[protein] + L-leucyl-tRNA(Leu) = N-terminal L-leucyl-L-arginyl-[protein] + tRNA(Leu) + H(+). It carries out the reaction L-phenylalanyl-tRNA(Phe) + an N-terminal L-alpha-aminoacyl-[protein] = an N-terminal L-phenylalanyl-L-alpha-aminoacyl-[protein] + tRNA(Phe). In terms of biological role, functions in the N-end rule pathway of protein degradation where it conjugates Leu, Phe and, less efficiently, Met from aminoacyl-tRNAs to the N-termini of proteins containing an N-terminal arginine or lysine. The protein is Leucyl/phenylalanyl-tRNA--protein transferase of Citrobacter koseri (strain ATCC BAA-895 / CDC 4225-83 / SGSC4696).